Reading from the N-terminus, the 20-residue chain is VIGGDICNINEHNFLVALYE.

It belongs to the peptidase S1 family. Snake venom subfamily. As to quaternary structure, monomer. Expressed by the venom gland.

It localises to the secreted. With respect to regulation, strongly inhibited by PMSF and moderately inhibited by leupeptin. Not inhibited by EDTA, aprotinin, pepstatin, and bestatin. In terms of biological role, thrombin-like snake venom serine protease that coagulates human plasma and bovine fibrinogen by hydrolysis of the alpha chains (FGA) (minimum coagulation dose is 60 ug on fibrinogen). Has fibrinogenolytic activities, and degrades preferentially the Aalpha chain (FGA). Shows amidolytic activity toward N-benzoyl-L-Arg-p-nitroanilide, has a higher activity than Cdc SI. In vivo, intravenous injection induces defibrin(ogen)ation and a loss of the righting reflex and opisthotoxins, together with a typical gyroxin-like effect (18-20 minutes). Subcutaneous injection into the footpads induces moderate edema. Potentiates local hemorrhagic activity induced by metalloproteinases (BaP1). In Crotalus durissus cumanensis (South American rattlesnake), this protein is Thrombin-like enzyme Cdc SII.